A 1211-amino-acid polypeptide reads, in one-letter code: Diacylglycerol kinase eta (1211 aa).

A disordered region spans residues 1–66 (MAGAGSQHHP…QMRTKTSIKE (66 aa)). Residues 19 to 32 (AGASAVSPTAAGPG) show a composition bias toward low complexity. Positions 52 to 61 (VSTSGQMRTK) are enriched in polar residues. The PH domain maps to 62-155 (TSIKEGQLLK…WISSLKSVQS (94 aa)). Phorbol-ester/DAG-type zinc fingers lie at residues 172–222 (MHNW…TNNC) and 244–295 (PHQW…HPVC). The region spanning 325–460 (FCVSPLLVFV…LDRWSIMTYE (136 aa)) is the DAGKc domain. Disordered stretches follow at residues 562–613 (SQAS…KPRE) and 634–694 (KVMD…SVAG). Composition is skewed to acidic residues over residues 576 to 589 (PEED…DESL) and 653 to 662 (YDTETDEAKE). Residues 670 to 691 (SAKTTSQSPDAQASCGHPQTDS) are compositionally biased toward polar residues. The SAM domain occupies 1143-1206 (WGTEEVAAWL…LQGIKELERN (64 aa)).

This sequence belongs to the eukaryotic diacylglycerol kinase family. Interacts with RAF1 and BRAF. In terms of assembly, homooligomers. Heterooligomers. Oligomerization through the SAM domain inhibits the diacylglycerol kinase activity. Heterooligomerizes with SAM domain-containing isoforms of DGKD. As to quaternary structure, does not form homooligomers. Phosphorylated. Phosphorylation does not inhibit catalytic activity. In terms of tissue distribution, widely expressed. Detected in the granulosa cells of the primary and secondary follicles. Expressed in mature follicles and corpus lutea. Expressed in the oviductal epithelium. In the uterus, strongly expressed in the luminal epithelium. Detected in the uterine glands. Detected in ovary and uterus (at protein level). As to expression, specifically expressed in testis. Detected in the inner area of the testis. Strongly expressed in the secondary spermatocytes and the round spermatids and weakly detected in the primary spermatocytes.

It is found in the cytoplasm. The protein resides in the cell membrane. The protein localises to the cytoskeleton. It carries out the reaction a 1,2-diacyl-sn-glycerol + ATP = a 1,2-diacyl-sn-glycero-3-phosphate + ADP + H(+). The enzyme catalyses 1,2-di-(9Z-octadecenoyl)-sn-glycerol + ATP = 1,2-di-(9Z-octadecenoyl)-sn-glycero-3-phosphate + ADP + H(+). The protein operates within lipid metabolism; glycerolipid metabolism. Functionally, diacylglycerol kinase that converts diacylglycerol/DAG into phosphatidic acid/phosphatidate/PA and regulates the respective levels of these two bioactive lipids. Thereby, acts as a central switch between the signaling pathways activated by these second messengers with different cellular targets and opposite effects in numerous biological processes. Plays a key role in promoting cell growth. Activates the Ras/B-Raf/C-Raf/MEK/ERK signaling pathway induced by EGF. Regulates the recruitment of RAF1 and BRAF from cytoplasm to membranes and their heterodimerization. The polypeptide is Diacylglycerol kinase eta (Mus musculus (Mouse)).